The primary structure comprises 418 residues: Aspartate aminotransferase, cytoplasmic (418 aa).

N-acetylserine is present on Ser2. L-aspartate is bound by residues Gly38, Trp135, and Asn188. At Lys255 the chain carries N6-(pyridoxal phosphate)lysine. L-aspartate is bound at residue Arg387. Ser389 is subject to Phosphoserine.

The protein belongs to the class-I pyridoxal-phosphate-dependent aminotransferase family. Homodimer. Requires pyridoxal 5'-phosphate as cofactor.

The protein resides in the cytoplasm. The protein localises to the peroxisome. It carries out the reaction L-aspartate + 2-oxoglutarate = oxaloacetate + L-glutamate. Functionally, plays a key role in amino acid metabolism. This chain is Aspartate aminotransferase, cytoplasmic (AAT2), found in Saccharomyces cerevisiae (strain ATCC 204508 / S288c) (Baker's yeast).